Here is a 294-residue protein sequence, read N- to C-terminus: Putative ribose uptake protein RbsU (294 aa).

The next 10 helical transmembrane spans lie at 5–24 (ALLIGLGPLLGWGLYPTIAS), 34–56 (ILGSTIGTLIFALIYAWVQGIAF), 61–80 (NLWFSILSGIGWASAQIVTF), 90–112 (RAMPITTAFQLLGASLWGVFALG), 121–138 (VLGGLALVGIIIGAWLTV), 153–170 (QAVIWLAVGEIGYWAYSA), 182–204 (AFVPQAIGMVIVSIVYALFLASR), 214–236 (VSYTHIISGFFFAFAALTYLISA), 243–265 (LATGFILSQTSVVLATLTGIWFL), and 275–292 (WVTIGGLILIIAAAAVTV).

Belongs to the GRP transporter (TC 2.A.7.5) family.

The protein localises to the cell membrane. Could be involved in the uptake of ribose. The sequence is that of Putative ribose uptake protein RbsU (rbsU) from Lactiplantibacillus plantarum (strain ATCC BAA-793 / NCIMB 8826 / WCFS1) (Lactobacillus plantarum).